The primary structure comprises 218 residues: Ribose-5-phosphate isomerase A (218 aa).

Substrate is bound by residues 28 to 31 (SGST), 81 to 84 (DGAD), and 94 to 97 (KGKG). E103 functions as the Proton acceptor in the catalytic mechanism. Substrate is bound at residue K121.

Belongs to the ribose 5-phosphate isomerase family. Homodimer.

The enzyme catalyses aldehydo-D-ribose 5-phosphate = D-ribulose 5-phosphate. The protein operates within carbohydrate degradation; pentose phosphate pathway; D-ribose 5-phosphate from D-ribulose 5-phosphate (non-oxidative stage): step 1/1. Catalyzes the reversible conversion of ribose-5-phosphate to ribulose 5-phosphate. The chain is Ribose-5-phosphate isomerase A from Wigglesworthia glossinidia brevipalpis.